A 409-amino-acid polypeptide reads, in one-letter code: MDNNFIFGIIAFTALVLVLAVIILFAKSKLVDSGDITISINDDPEKGITLPAGGKLLGALASKGIFVSSACGGGGSCGQCKVQVNSGGGEILPTELSHISKKEAKEGWRLACQVNVKSSMDVELPEEIFGVKKWECTVISNDNKATFIKELKLQIPEGEEVPFRAGGYIQIEAEPHTVNYKDFDIPKEYHEDWDKFNLWRYVSKVDEHIIRAYSMASYPEEKGIIMLNVRIATPPPRQPDAPPGQMSSYIWSLKAGDKVTISGPFGEFFAKETDNEMVFIGGGAGMAPMRSHIFDQLKRLKSKRKMSFWYGARSKREMFYVEDFDQLQAENDNFKWHVALSDPLPEDNWDGYTGFIHNVLYENYLKNHEAPEDCEYYMCGPPVMNAAVIGMLKSLGVEDENILLDDFGG.

The chain crosses the membrane as a helical span at residues F5–F25. In terms of domain architecture, 2Fe-2S ferredoxin-type spans G34 to I128. The [2Fe-2S] cluster site is built by C71, C77, C80, and C112. Residues V131 to K271 form the FAD-binding FR-type domain.

This sequence belongs to the NqrF family. In terms of assembly, composed of six subunits; NqrA, NqrB, NqrC, NqrD, NqrE and NqrF. Requires [2Fe-2S] cluster as cofactor. The cofactor is FAD.

It localises to the cell inner membrane. It carries out the reaction a ubiquinone + n Na(+)(in) + NADH + H(+) = a ubiquinol + n Na(+)(out) + NAD(+). Functionally, NQR complex catalyzes the reduction of ubiquinone-1 to ubiquinol by two successive reactions, coupled with the transport of Na(+) ions from the cytoplasm to the periplasm. The first step is catalyzed by NqrF, which accepts electrons from NADH and reduces ubiquinone-1 to ubisemiquinone by a one-electron transfer pathway. This chain is Na(+)-translocating NADH-quinone reductase subunit F, found in Haemophilus ducreyi (strain 35000HP / ATCC 700724).